Here is a 252-residue protein sequence, read N- to C-terminus: Triosephosphate isomerase (252 aa).

A substrate-binding site is contributed by Asn10–Lys12. Catalysis depends on His96, which acts as the Electrophile. Glu168 serves as the catalytic Proton acceptor. Residues Gly174, Ser213, and Gly234–Gly235 each bind substrate.

Belongs to the triosephosphate isomerase family. As to quaternary structure, homodimer.

The protein localises to the cytoplasm. It carries out the reaction D-glyceraldehyde 3-phosphate = dihydroxyacetone phosphate. Its pathway is carbohydrate biosynthesis; gluconeogenesis. It participates in carbohydrate degradation; glycolysis; D-glyceraldehyde 3-phosphate from glycerone phosphate: step 1/1. Its function is as follows. Involved in the gluconeogenesis. Catalyzes stereospecifically the conversion of dihydroxyacetone phosphate (DHAP) to D-glyceraldehyde-3-phosphate (G3P). This is Triosephosphate isomerase from Nitrosomonas europaea (strain ATCC 19718 / CIP 103999 / KCTC 2705 / NBRC 14298).